The primary structure comprises 281 residues: TIP41-like protein (281 aa).

The protein belongs to the TIP41 family.

This Caenorhabditis elegans protein is TIP41-like protein.